Here is a 331-residue protein sequence, read N- to C-terminus: Tetraacyldisaccharide 4'-kinase (331 aa).

Thr-51–Thr-58 contacts ATP.

Belongs to the LpxK family.

It catalyses the reaction a lipid A disaccharide + ATP = a lipid IVA + ADP + H(+). It functions in the pathway glycolipid biosynthesis; lipid IV(A) biosynthesis; lipid IV(A) from (3R)-3-hydroxytetradecanoyl-[acyl-carrier-protein] and UDP-N-acetyl-alpha-D-glucosamine: step 6/6. Functionally, transfers the gamma-phosphate of ATP to the 4'-position of a tetraacyldisaccharide 1-phosphate intermediate (termed DS-1-P) to form tetraacyldisaccharide 1,4'-bis-phosphate (lipid IVA). The sequence is that of Tetraacyldisaccharide 4'-kinase from Rhodospirillum rubrum (strain ATCC 11170 / ATH 1.1.1 / DSM 467 / LMG 4362 / NCIMB 8255 / S1).